Here is a 581-residue protein sequence, read N- to C-terminus: MPAPRAREQPRVPGERQPLLPRGARGPRRWRRAAGAAVLLVEMLERAAFFGVTANLVLYLNSTNFNWTGEQATRAALVFLGASYLLAPVGGWLADVYLGRYRAVALSLLLYLAASGLLPATAFPDGRSSFCGEMPASPLGPACPSAGCPRSSPSPYCAPVLYAGLLLLGLAASSVRSNLTSFGADQVMDLGRDATRRFFNWFYWSINLGAVLSLLVVAFIQQNISFLLGYSIPVGCVGLAFFIFLFATPVFITKPPMGSQVSSMLKLALQNCCPQLWQRHSARDRQCARVLADERSPQPGASPQEDIANFQVLVKILPVMVTLVPYWMVYFQMQSTYVLQGLHLHIPNIFPANPANISVALRAQGSSYTIPEAWLLLANVVVVLILVPLKDRLIDPLLLRCKLLPSALQKMALGMFFGFTSVIVAGVLEMERLHYIHHNETVSQQIGEVLYNAAPLSIWWQIPQYLLIGISEIFASIPGLEFAYSEAPRSMQGAIMGIFFCLSGVGSLLGSSLVALLSLPGGWLHCPKDFGNINNCRMDLYFFLLAGIQAVTALLFVWIAGRYERASQGPASHSRFSRDRG.

The segment covering 1-14 has biased composition (basic and acidic residues); that stretch reads MPAPRAREQPRVPG. Residues 1 to 26 form a disordered region; sequence MPAPRAREQPRVPGERQPLLPRGARG. A helical membrane pass occupies residues 38–58; the sequence is VLLVEMLERAAFFGVTANLVL. Residues N61 and N66 are each glycosylated (N-linked (GlcNAc...) asparagine). 3 helical membrane-spanning segments follow: residues 76–96, 103–123, and 155–175; these read ALVFLGASYLLAPVGGWLADV, AVALSLLLYLAASGLLPATAF, and PYCAPVLYAGLLLLGLAASSV. The N-linked (GlcNAc...) asparagine glycan is linked to N178. Residues 200 to 220 form a helical membrane-spanning segment; the sequence is NWFYWSINLGAVLSLLVVAFI. N223 carries an N-linked (GlcNAc...) asparagine glycan. The next 2 helical transmembrane spans lie at 232–252 and 310–330; these read IPVGCVGLAFFIFLFATPVFI and FQVLVKILPVMVTLVPYWMVY. The N-linked (GlcNAc...) asparagine glycan is linked to N356. The next 2 membrane-spanning stretches (helical) occupy residues 369–389 and 411–431; these read TIPEAWLLLANVVVVLILVPL and MALGMFFGFTSVIVAGVLEME. A glycan (N-linked (GlcNAc...) asparagine) is linked at N439. Helical transmembrane passes span 458–478, 497–517, and 540–560; these read IWWQIPQYLLIGISEIFASIP, GIFFCLSGVGSLLGSSLVALL, and LYFFLLAGIQAVTALLFVWIA.

Belongs to the major facilitator superfamily. Proton-dependent oligopeptide transporter (POT/PTR) (TC 2.A.17) family.

Its subcellular location is the lysosome membrane. It is found in the endosome membrane. It carries out the reaction glycylglycylglycine(out) + n H(+)(out) = glycylglycylglycine(in) + n H(+)(in). The enzyme catalyses carnosine(out) + n H(+)(out) = carnosine(in) + n H(+)(in). It catalyses the reaction L-histidine(out) + n H(+)(out) = L-histidine(in) + n H(+)(in). The catalysed reaction is N-acetyl-D-muramoyl-L-alanyl-D-isoglutamine(out) + n H(+)(out) = N-acetyl-D-muramoyl-L-alanyl-D-isoglutamine(in) + n H(+)(in). In terms of biological role, proton-coupled amino-acid transporter that transports free histidine and certain di- and tripeptides, and is involved in innate immune response. Also able to transport carnosine. Involved in the detection of microbial pathogens by toll-like receptors (TLRs) and NOD-like receptors (NLRs), probably by mediating transport of bacterial peptidoglycans across the endolysosomal membrane: catalyzes the transport of certain bacterial peptidoglycans, such as muramyl dipeptide (MDP), the NOD2 ligand. The protein is Solute carrier family 15 member 3 of Homo sapiens (Human).